A 303-amino-acid polypeptide reads, in one-letter code: Aspartate carbamoyltransferase catalytic subunit (303 aa).

Positions 51 and 52 each coordinate carbamoyl phosphate. Residue Lys-80 participates in L-aspartate binding. Carbamoyl phosphate-binding residues include Arg-101, His-129, and Gln-132. Positions 162 and 221 each coordinate L-aspartate. Positions 260 and 261 each coordinate carbamoyl phosphate.

This sequence belongs to the aspartate/ornithine carbamoyltransferase superfamily. ATCase family. In terms of assembly, heterooligomer of catalytic and regulatory chains.

It carries out the reaction carbamoyl phosphate + L-aspartate = N-carbamoyl-L-aspartate + phosphate + H(+). It functions in the pathway pyrimidine metabolism; UMP biosynthesis via de novo pathway; (S)-dihydroorotate from bicarbonate: step 2/3. Functionally, catalyzes the condensation of carbamoyl phosphate and aspartate to form carbamoyl aspartate and inorganic phosphate, the committed step in the de novo pyrimidine nucleotide biosynthesis pathway. The sequence is that of Aspartate carbamoyltransferase catalytic subunit from Saccharolobus islandicus (strain M.16.4 / Kamchatka #3) (Sulfolobus islandicus).